The sequence spans 122 residues: Large ribosomal subunit protein uL14 (122 aa).

Belongs to the universal ribosomal protein uL14 family. Part of the 50S ribosomal subunit. Forms a cluster with proteins L3 and L19. In the 70S ribosome, L14 and L19 interact and together make contacts with the 16S rRNA in bridges B5 and B8.

In terms of biological role, binds to 23S rRNA. Forms part of two intersubunit bridges in the 70S ribosome. The chain is Large ribosomal subunit protein uL14 from Bartonella quintana (strain Toulouse) (Rochalimaea quintana).